Consider the following 431-residue polypeptide: Glutamate-1-semialdehyde 2,1-aminomutase (431 aa).

Lys267 bears the N6-(pyridoxal phosphate)lysine mark.

It belongs to the class-III pyridoxal-phosphate-dependent aminotransferase family. HemL subfamily. Homodimer. The cofactor is pyridoxal 5'-phosphate.

Its subcellular location is the cytoplasm. The catalysed reaction is (S)-4-amino-5-oxopentanoate = 5-aminolevulinate. The protein operates within porphyrin-containing compound metabolism; protoporphyrin-IX biosynthesis; 5-aminolevulinate from L-glutamyl-tRNA(Glu): step 2/2. In Myxococcus xanthus (strain DK1622), this protein is Glutamate-1-semialdehyde 2,1-aminomutase.